The primary structure comprises 185 residues: UPF0669 protein C6orf120 homolog (185 aa).

Positions 1–23 (MATPWRRALLMILASQVVTLVKC) are cleaved as a signal peptide. An N-linked (GlcNAc...) asparagine glycan is attached at N47.

Belongs to the UPF0669 family.

Its subcellular location is the secreted. In terms of biological role, may be involved in induction of apoptosis in CD4(+) T-cells, but not CD8(+) T-cells or hepatocytes. This Mus musculus (Mouse) protein is UPF0669 protein C6orf120 homolog.